The chain runs to 280 residues: Clathrin adapter accessory protein LAA2 (280 aa).

The disordered stretch occupies residues Met-1 to Asn-26. An Ear-binding motif motif is present at residues Asp-19–Ala-30.

In terms of assembly, interacts with the clathrin-associated adapter complex AP-1. Interacts with LAA1.

The protein resides in the cytoplasmic vesicle. Its subcellular location is the clathrin-coated vesicle. Its function is as follows. Involved in localization of clathrin-associated adapter complex (AP-1) and subsequent AP-1-mediated clathrin-coated vesicle cargo loading. Directly mediates the interaction between LAA1 and AP-1 which is required for AP-1 localization. In complex with LAA1, cooperates with the small GTPase ARF1 and the phosphatidyl-inositol-4-phosphate (PI4P) synthesis to confer temporal specificity to AP-1 recruitment. The sequence is that of Clathrin adapter accessory protein LAA2 from Saccharomyces cerevisiae (strain ATCC 204508 / S288c) (Baker's yeast).